The sequence spans 313 residues: ADP-L-glycero-D-manno-heptose-6-epimerase (313 aa).

NADP(+) contacts are provided by residues 10 to 11, 31 to 32, Lys-38, Arg-53, 75 to 79, and Asn-92; these read MI, DN, and EGACS. Catalysis depends on Tyr-139, which acts as the Proton acceptor. Lys-143 contacts NADP(+). Asn-174 is a binding site for substrate. Positions 175 and 183 each coordinate NADP(+). Lys-183 serves as the catalytic Proton acceptor. Residues Ser-185, His-192, 206-209, Arg-214, and Tyr-277 contribute to the substrate site; that span reads FAGS.

It belongs to the NAD(P)-dependent epimerase/dehydratase family. HldD subfamily. In terms of assembly, homopentamer. It depends on NADP(+) as a cofactor.

The catalysed reaction is ADP-D-glycero-beta-D-manno-heptose = ADP-L-glycero-beta-D-manno-heptose. Its pathway is nucleotide-sugar biosynthesis; ADP-L-glycero-beta-D-manno-heptose biosynthesis; ADP-L-glycero-beta-D-manno-heptose from D-glycero-beta-D-manno-heptose 7-phosphate: step 4/4. The protein operates within bacterial outer membrane biogenesis; LPS core biosynthesis. Its function is as follows. Catalyzes the interconversion between ADP-D-glycero-beta-D-manno-heptose and ADP-L-glycero-beta-D-manno-heptose via an epimerization at carbon 6 of the heptose. The sequence is that of ADP-L-glycero-D-manno-heptose-6-epimerase from Vibrio vulnificus (strain YJ016).